Here is a 352-residue protein sequence, read N- to C-terminus: MIETDKLAAPARVIAATPASSQEEAFERALRPKLLDEYVGQEKVRGQLDIFMHAARNRREALDHVLLFGPPGLGKTTLAHIIAREMGVNLRQTSGPVLERPGDLAALLTNLEANDVLFIDEIHRLSPVVEEILYPALEDYQIDIMIGEGPAARSVKLDLQPFTLVGATTRAGMLTNPLRDRFGIVARLEFYTADELARIVTRSAQLLHARIDPQGALEIARRARGTPRIANRLLRRVRDYAEVKGDGNITRAMADAALAMLDVDSVGFDLMDRKLLEAVLHKFGGGPVGVDNLAAAIGEERDTIEDVLEPYLIQQGYLQRTPRGRVATAAAYRHFGLANPQGSGASELFGDA.

The segment at 4–191 is large ATPase domain (RuvB-L); that stretch reads TDKLAAPARV…FGIVARLEFY (188 aa). Residues leucine 30, arginine 31, glycine 72, lysine 75, threonine 76, threonine 77, 138–140, arginine 181, tyrosine 191, and arginine 228 each bind ATP; that span reads EDY. Residue threonine 76 participates in Mg(2+) binding. A small ATPAse domain (RuvB-S) region spans residues 192 to 262; that stretch reads TADELARIVT…MADAALAMLD (71 aa). Positions 265–352 are head domain (RuvB-H); the sequence is SVGFDLMDRK…SGASELFGDA (88 aa). DNA contacts are provided by arginine 301, arginine 320, and arginine 325.

This sequence belongs to the RuvB family. Homohexamer. Forms an RuvA(8)-RuvB(12)-Holliday junction (HJ) complex. HJ DNA is sandwiched between 2 RuvA tetramers; dsDNA enters through RuvA and exits via RuvB. An RuvB hexamer assembles on each DNA strand where it exits the tetramer. Each RuvB hexamer is contacted by two RuvA subunits (via domain III) on 2 adjacent RuvB subunits; this complex drives branch migration. In the full resolvosome a probable DNA-RuvA(4)-RuvB(12)-RuvC(2) complex forms which resolves the HJ.

The protein resides in the cytoplasm. It catalyses the reaction ATP + H2O = ADP + phosphate + H(+). Functionally, the RuvA-RuvB-RuvC complex processes Holliday junction (HJ) DNA during genetic recombination and DNA repair, while the RuvA-RuvB complex plays an important role in the rescue of blocked DNA replication forks via replication fork reversal (RFR). RuvA specifically binds to HJ cruciform DNA, conferring on it an open structure. The RuvB hexamer acts as an ATP-dependent pump, pulling dsDNA into and through the RuvAB complex. RuvB forms 2 homohexamers on either side of HJ DNA bound by 1 or 2 RuvA tetramers; 4 subunits per hexamer contact DNA at a time. Coordinated motions by a converter formed by DNA-disengaged RuvB subunits stimulates ATP hydrolysis and nucleotide exchange. Immobilization of the converter enables RuvB to convert the ATP-contained energy into a lever motion, pulling 2 nucleotides of DNA out of the RuvA tetramer per ATP hydrolyzed, thus driving DNA branch migration. The RuvB motors rotate together with the DNA substrate, which together with the progressing nucleotide cycle form the mechanistic basis for DNA recombination by continuous HJ branch migration. Branch migration allows RuvC to scan DNA until it finds its consensus sequence, where it cleaves and resolves cruciform DNA. This chain is Holliday junction branch migration complex subunit RuvB, found in Cupriavidus necator (strain ATCC 17699 / DSM 428 / KCTC 22496 / NCIMB 10442 / H16 / Stanier 337) (Ralstonia eutropha).